Consider the following 260-residue polypeptide: Diphthine synthase (260 aa).

S-adenosyl-L-methionine contacts are provided by residues Leu9, Asp85, Ile88, 113–114 (TA), Leu168, Ala208, and His233.

The protein belongs to the diphthine synthase family. As to quaternary structure, homodimer.

The catalysed reaction is 2-[(3S)-amino-3-carboxypropyl]-L-histidyl-[translation elongation factor 2] + 3 S-adenosyl-L-methionine = diphthine-[translation elongation factor 2] + 3 S-adenosyl-L-homocysteine + 3 H(+). Its pathway is protein modification; peptidyl-diphthamide biosynthesis. S-adenosyl-L-methionine-dependent methyltransferase that catalyzes the trimethylation of the amino group of the modified target histidine residue in translation elongation factor 2 (EF-2), to form an intermediate called diphthine. The three successive methylation reactions represent the second step of diphthamide biosynthesis. In Halobacterium salinarum (strain ATCC 29341 / DSM 671 / R1), this protein is Diphthine synthase.